A 145-amino-acid polypeptide reads, in one-letter code: Globin (145 aa).

Ser2 is subject to N-acetylserine. The Globin domain maps to 2-145 (SLSAAEADLV…IVAALKAAGK (144 aa)). His96 provides a ligand contact to heme b.

The protein belongs to the globin family. As to quaternary structure, monomer.

The sequence is that of Globin from Aplysia kurodai (Kuroda's sea hare).